A 282-amino-acid polypeptide reads, in one-letter code: Cyclic AMP-dependent transcription factor ATF-5 (282 aa).

The interval 1–21 is required for protein stabilization induced by IL1B; the sequence is MSLLATLGLELDRALLPASGL. The residue at position 29 (Lys29) is an N6-acetyllysine; by EP300. Disordered regions lie at residues 116-152 and 173-238; these read FLDA…DLPQ and EEVG…ALEG. Residues 119 to 217 are interaction with PTP4A1; that stretch reads APPLPPPSPP…GDRKQKKRDQ (99 aa). Over residues 120–140 the composition is skewed to pro residues; the sequence is PPLPPPSPPPLPPPPLPPAPS. The segment covering 141-150 has biased composition (low complexity); sequence LPLSLPSFDL. Residues 178 to 194 show a composition bias toward pro residues; it reads PPLPPPQQPPPPSPPQP. The bZIP domain maps to 208–271; it reads GDRKQKKRDQ…QYVKDLLIEV (64 aa). The segment at 210 to 230 is basic motif; that stretch reads RKQKKRDQNKSAALRYRQRKR. Positions 236–250 are leucine-zipper; that stretch reads LEGECQGLEARNREL. The residue at position 256 (Ser256) is a Phosphoserine.

Belongs to the bZIP family. As to quaternary structure, binds DNA as a dimer. Interacts with PTP4A1/PRL-1. Interacts with CCND3, but not with CCND1 or CCND2. Interacts with HSPA1A or HSPA1B; the interaction protects ATF5 from degradation via proteasome-dependent and caspase-dependent processes. Interacts (via C-terminal region) with NPM1 (via C-terminal region); the interaction leads to loss of association between HSPA1A or HSPA1B and ATF5 and promotes ATF5 degradation via proteasome-dependent and caspase-dependent processes. Interacts with NLK; the interaction stabilizes ATF5 at the protein level in a kinase-independent manner. Interacts with alpha-tubulin, gamma-tubulin members TUBGCP2 and TUBGCP4, PCNT; the ATF5:PCNT:polyglutamylated tubulin (PGT) tripartite unites the mother centriole and the pericentriolar material (PCM) in the centrosome. Interacts with CEBPB and EP300; EP300 is required for ATF5 and CEBPB interaction and DNA binding. Ubiquitinated by CDC34 and UBE2B in order to be degraded by the proteasome. Cisplatin inhibits ubiquitination and proteasome-mediated degradation by inhibiting the interaction with CDC34. Ubiquitination and degradation by the proteasome are inhibited by NLK in a kinase-independent manner. In terms of processing, phosphorylated by NLK, probably at Ser-92, Thr-94, Ser-126 and Ser-190. Post-translationally, acetylated at Lys-29 by EP300, the acetylation enhances the interaction with CEBPB, DNA-binding and transactivation activity. Widely expressed with higher expression levels in liver.

It localises to the cytoplasm. It is found in the nucleus. The protein localises to the cytoskeleton. The protein resides in the microtubule organizing center. Its subcellular location is the centrosome. Functionally, transcription factor that either stimulates or represses gene transcription through binding of different DNA regulatory elements such as cAMP response element (CRE) (consensus: 5'-GTGACGT[AC][AG]-3'), ATF5-specific response element (ARE) (consensus: 5'-C[CT]TCT[CT]CCTT[AT]-3') but also the amino acid response element (AARE), present in many viral and cellular promoters. Critically involved, often in a cell type-dependent manner, in cell survival, proliferation, and differentiation. Its transcriptional activity is enhanced by CCND3 and slightly inhibited by CDK4. Important regulator of the cerebral cortex formation, functions in cerebral cortical neuroprogenitor cells to maintain proliferation and to block differentiation into neurons. Must be down-regulated in order for such cells to exit the cycle and differentiate. Participates in the pathways by which SHH promotes cerebellar granule neuron progenitor cells proliferation. Critical for survival of mature olfactory sensory neurons (OSN), directs expression of OSN-specific genes. May be involved in osteogenic differentiation. Promotes cell proliferation and survival by inducing the expression of EGR1 sinergistically with ELK1. Once acetylated by EP300, binds to ARE sequences on target genes promoters, such as BCL2 and EGR1. Plays an anti-apoptotic role through the transcriptional regulation of BCL2, this function seems to be cell type-dependent. Cooperates with NR1I3/CAR in the transcriptional activation of CYP2B6 in liver. In hepatic cells, represses CRE-dependent transcription and inhibits proliferation by blocking at G2/M phase. May act as a negative regulator of IL1B transduction pathway in liver. Upon IL1B stimulus, cooperates with NLK to activate the transactivation activity of C/EBP subfamily members. Besides its function of transcription factor, acts as a cofactor of CEBPB to activate CEBPA and promote adipocyte differentiation. Regulates centrosome dynamics in a cell-cycle- and centriole-age-dependent manner. Forms 9-foci symmetrical ring scaffold around the mother centriole to control centrosome function and the interaction between centrioles and pericentriolar material. This is Cyclic AMP-dependent transcription factor ATF-5 (ATF5) from Homo sapiens (Human).